A 63-amino-acid polypeptide reads, in one-letter code: Large ribosomal subunit protein bL28 (63 aa).

The protein belongs to the bacterial ribosomal protein bL28 family.

This Coprothermobacter proteolyticus (strain ATCC 35245 / DSM 5265 / OCM 4 / BT) protein is Large ribosomal subunit protein bL28.